The sequence spans 258 residues: MVLITVLANLLILQLSYAQKSSKLVFGGDECNINEHRSLVVLFNSSGFLCAGTLINKEWVLTAAHCDSENFQMQLGVHSKKVPNKDEETRDPKEKFICPNRKKNDEKDKDIMLIRLNRPVSNSEHIALLSLPSSPPSVGSVCRIMGWGTISPTKEIYPDVPHCADINILDHAVCRAAYSGWLATSTTLCAGILEGGKDSCHGDSGGPLICNGQFQGIVSLGRHPCGHPDEPGVYTKVFDYTDWIQSIIAGNTDAACPP.

Residues M1–A18 form the signal peptide. Positions Q19–L24 are excised as a propeptide. The Peptidase S1 domain occupies V25–A249. N-linked (GlcNAc...) asparagine glycosylation occurs at N44. A disulfide bond links C50 and C66. Catalysis depends on charge relay system residues H65 and D110. Cystine bridges form between C142-C210, C174-C189, and C200-C225. S204 functions as the Charge relay system in the catalytic mechanism.

The protein belongs to the peptidase S1 family. Snake venom subfamily. As to quaternary structure, monomer. In terms of processing, N-glycosylated. PubMed:17034951 shows that it contains approximately 10% carbohydrates, PubMed:10871053 shows that it contains approximately 20% carbohydrates. Expressed by the venom gland.

The protein localises to the secreted. With respect to regulation, inhibited by the serine protease inhibitors NPGB, PMSF, p-aminobenzamidine and aprotinin. Not inhibited by soybean trypsin inhibitor or EDTA. In terms of biological role, snake venom serine protease that activates plasminogen. Weakly hydrolyzes the alpha chain of human fibrinogen without releasing fibrinopeptide A. Does not hydrolyze plasma kallikrein or factor Xa. Does not clot fibrinogen. Does not affect platelet function. Induces hypotensive effects on rats. Shows a preferential cleavage at Lys-|-Xaa over Arg-|-Xaa bonds. The protein is Venom plasminogen activator LV-PA of Lachesis muta muta (Bushmaster).